The following is a 907-amino-acid chain: Cytochrome b561, DM13 and DOMON domain-containing protein At5g54830 (907 aa).

A signal peptide spans 1–24; that stretch reads MCDQRPNLLGSLVLLGFFIFFVNG. A DM13 domain is found at 31-139; sequence SSLIGHESEF…ASDFGHVLLS (109 aa). Residues 144–172 form a disordered region; that stretch reads SDTSKAESPPSESNDVAPGKSNNSEPFKA. The span at 153–168 shows a compositional bias: polar residues; sequence PSESNDVAPGKSNNSE. DOMON domains are found at residues 184-329 and 524-645; these read DKYR…WALG and QQVK…WAMG. Residues 653–850 form the Cytochrome b561 domain; that stretch reads LTERNMHSVT…CVVTVAYLEY (198 aa). Residues 685-705 form a helical membrane-spanning segment; sequence VLGVHGFMMFLAWGILLPGGI. Heme b-binding residues include histidine 689 and histidine 723. The next 4 membrane-spanning stretches (helical) occupy residues 730 to 750, 754 to 774, 795 to 815, and 829 to 849; these read GLAI…GFSF, HVKF…NAWL, SHSI…FTGM, and GLNL…AYLE. Heme b-binding residues include histidine 754 and histidine 796. Residues 884–897 show a composition bias toward basic and acidic residues; it reads GGFRDKDDEDRNGG. The tract at residues 884–907 is disordered; sequence GGFRDKDDEDRNGGRMEIQLEPLK.

Heme b serves as cofactor.

The protein resides in the membrane. In terms of biological role, may act as a catecholamine-responsive trans-membrane electron transporter. This chain is Cytochrome b561, DM13 and DOMON domain-containing protein At5g54830, found in Arabidopsis thaliana (Mouse-ear cress).